We begin with the raw amino-acid sequence, 419 residues long: Phosphatidylinositol 5-phosphate 4-kinase type-2 gamma (419 aa).

Residues Ala-46–Phe-418 enclose the PIPK domain. The span at Gln-299–Thr-310 shows a compositional bias: acidic residues. A disordered region spans residues Gln-299–Val-320.

In terms of processing, phosphorylated, phosphorylation is induced by EGF.

The protein resides in the endoplasmic reticulum. Its subcellular location is the cytoplasm. It catalyses the reaction a 1,2-diacyl-sn-glycero-3-phospho-(1D-myo-inositol-5-phosphate) + ATP = a 1,2-diacyl-sn-glycero-3-phospho-(1D-myo-inositol-4,5-bisphosphate) + ADP + H(+). It carries out the reaction 1,2-dihexadecanoyl-sn-glycero-3-phospho-(1D-myo-inositol-5-phosphate) + ATP = 1,2-dihexadecanoyl-sn-glycero-3-phospho-(1D-myo-inositol-4,5-bisphosphate) + ADP + H(+). The catalysed reaction is 1,2-dihexadecanoyl-sn-glycero-3-phospho-(1D-myo-inositol-5-phosphate) + GTP = 1,2-dihexadecanoyl-sn-glycero-3-phospho-(1D-myo-inositol-4,5-bisphosphate) + GDP + H(+). Its function is as follows. Phosphatidylinositol 5-phosphate 4-kinase with low enzymatic activity. May be a GTP sensor, has higher GTP-dependent kinase activity than ATP-dependent kinase activity. The sequence is that of Phosphatidylinositol 5-phosphate 4-kinase type-2 gamma (pip4k2c) from Xenopus tropicalis (Western clawed frog).